The following is a 219-amino-acid chain: Elongation factor Ts (219 aa).

The tract at residues 82–85 (TDFV) is involved in Mg(2+) ion dislocation from EF-Tu.

The protein belongs to the EF-Ts family.

The protein resides in the cytoplasm. Functionally, associates with the EF-Tu.GDP complex and induces the exchange of GDP to GTP. It remains bound to the aminoacyl-tRNA.EF-Tu.GTP complex up to the GTP hydrolysis stage on the ribosome. This Anaeromyxobacter dehalogenans (strain 2CP-C) protein is Elongation factor Ts.